We begin with the raw amino-acid sequence, 379 residues long: L-lactate dehydrogenase (379 aa).

An FMN hydroxy acid dehydrogenase domain is found at 1 to 379; it reads MIISASTDYR…IGRDSLVNLP (379 aa). Residue Tyr24 coordinates substrate. FMN is bound by residues Ser106 and Gln127. Substrate is bound at residue Tyr129. Thr155 is an FMN binding site. Arg164 lines the substrate pocket. Residue Lys251 participates in FMN binding. His275 (proton acceptor) is an active-site residue. Arg278 is a binding site for substrate. Position 306–330 (306–330) interacts with FMN; the sequence is DSGIRTGLDVVRMLALGADTVLLGR.

This sequence belongs to the FMN-dependent alpha-hydroxy acid dehydrogenase family. FMN is required as a cofactor.

The protein localises to the cell inner membrane. The enzyme catalyses (S)-lactate + A = pyruvate + AH2. In terms of biological role, catalyzes the conversion of L-lactate to pyruvate. Is coupled to the respiratory chain. In Stenotrophomonas maltophilia (strain R551-3), this protein is L-lactate dehydrogenase.